A 113-amino-acid polypeptide reads, in one-letter code: UPF0482 protein KPK_2871 (113 aa).

A signal peptide spans 1 to 28; the sequence is MNMTLNKRWCLTAILALSAVVYTSSSFA. Positions 38–61 are disordered; that stretch reads GDSAQSRQQASMEKEQWNDTRSLR. Polar residues predominate over residues 39 to 48; sequence DSAQSRQQAS. Basic and acidic residues predominate over residues 49 to 59; the sequence is MEKEQWNDTRS.

It belongs to the UPF0482 family.

The protein is UPF0482 protein KPK_2871 of Klebsiella pneumoniae (strain 342).